The chain runs to 60 residues: UPF0434 protein Ssed_2824 (60 aa).

Belongs to the UPF0434 family.

This is UPF0434 protein Ssed_2824 from Shewanella sediminis (strain HAW-EB3).